The sequence spans 380 residues: Cytochrome b (380 aa).

A run of 4 helical transmembrane segments spans residues 34–54 (FGSL…LLAM), 78–99 (WLIR…YLHI), 114–134 (WNTG…GYVL), and 179–199 (FFAL…IHLT). Residues His-84 and His-98 each contribute to the heme b site. Residues His-183 and His-197 each coordinate heme b. His-202 contributes to the a ubiquinone binding site. A run of 4 helical transmembrane segments spans residues 227-247 (LKDI…ALFS), 289-309 (LGGV…PFLH), 321-341 (ISQL…WVGS), and 348-368 (FIII…ILFP).

Belongs to the cytochrome b family. The cytochrome bc1 complex contains 11 subunits: 3 respiratory subunits (MT-CYB, CYC1 and UQCRFS1), 2 core proteins (UQCRC1 and UQCRC2) and 6 low-molecular weight proteins (UQCRH/QCR6, UQCRB/QCR7, UQCRQ/QCR8, UQCR10/QCR9, UQCR11/QCR10 and a cleavage product of UQCRFS1). This cytochrome bc1 complex then forms a dimer. Heme b serves as cofactor.

It is found in the mitochondrion inner membrane. Component of the ubiquinol-cytochrome c reductase complex (complex III or cytochrome b-c1 complex) that is part of the mitochondrial respiratory chain. The b-c1 complex mediates electron transfer from ubiquinol to cytochrome c. Contributes to the generation of a proton gradient across the mitochondrial membrane that is then used for ATP synthesis. The polypeptide is Cytochrome b (MT-CYB) (Puffinus opisthomelas (Black-vented shearwater)).